Consider the following 263-residue polypeptide: MPLHSVIVLVLVLCLGWKSNTQEESLSDFTICAEPGPVIPQGNFITIVCSTSGEYDTVRLEKEGSTFMEKKTEPHGKQHRFRIGPVNETITGYYNCIFEKNYVWSQRSNDLQLKVIKENVTQGLAPGPSMTSDTSWLKTYSIHILTVVSVIFLLCLSLFLFCFLSHRQKKQGLPNNKSQHQRSQERLNLATNGLEKTSDIVMDDSLSEDRQTETWTPVAGDLQEVTYAQLDHDSLTQRTVKDVTPQNRVIMAESSTYAAIMRC.

The N-terminal stretch at 1–21 is a signal peptide; it reads MPLHSVIVLVLVLCLGWKSNT. The Ig-like C2-type domain occupies 27–112; that stretch reads SDFTICAEPG…VWSQRSNDLQ (86 aa). An intrachain disulfide couples Cys-49 to Cys-96. Asn-87 is a glycosylation site (N-linked (GlcNAc...) asparagine). A helical membrane pass occupies residues 144-164; the sequence is ILTVVSVIFLLCLSLFLFCFL. Short sequence motifs (ITIM motif) lie at residues 225–230 and 255–260; these read VTYAQL and STYAAI. A phosphotyrosine mark is found at Tyr-227 and Tyr-257.

In terms of assembly, interacts with SH2 domains of tyrosine-protein phosphatases PTPN6 and PTPN11. The interaction with PTPN6 is constitutive. Interacts with the SH2 domain of CSK. Binds with high affinity to extracellular matrix collagens, the interaction is functionally important. Post-translationally, phosphorylation at Tyr-227 and Tyr-257 activates it. May be phosphorylated by LCK. In terms of processing, N-glycosylated. In terms of tissue distribution, expressed in lymphoid and non-lymphoid organs.

Its subcellular location is the membrane. In terms of biological role, functions as an inhibitory receptor that plays a constitutive negative regulatory role on cytolytic function of natural killer (NK) cells, B-cells and T-cells. Activation by Tyr phosphorylation results in recruitment and activation of the phosphatases PTPN6 and PTPN11. It also reduces the increase of intracellular calcium evoked by B-cell receptor ligation. May also play its inhibitory role independently of SH2-containing phosphatases. Modulates cytokine production in CD4+ T-cells, down-regulating IL2 and IFNG production while inducing secretion of transforming growth factor beta. Also down-regulates IgG and IgE production in B-cells as well as IL8, IL10 and TNF secretion. Inhibits proliferation and induces apoptosis in myeloid leukemia cell lines as well as prevents nuclear translocation of NF-kappa-B p65 subunit/RELA and phosphorylation of I-kappa-B alpha/CHUK in these cells. Inhibits the differentiation of peripheral blood precursors towards dendritic cells. The polypeptide is Leukocyte-associated immunoglobulin-like receptor 1 (Lair1) (Rattus norvegicus (Rat)).